A 334-amino-acid polypeptide reads, in one-letter code: 6-phosphogluconolactonase (334 aa).

It belongs to the cycloisomerase 2 family.

It catalyses the reaction 6-phospho-D-glucono-1,5-lactone + H2O = 6-phospho-D-gluconate + H(+). Its pathway is carbohydrate degradation; pentose phosphate pathway; D-ribulose 5-phosphate from D-glucose 6-phosphate (oxidative stage): step 2/3. Functionally, catalyzes the hydrolysis of 6-phosphogluconolactone to 6-phosphogluconate. The sequence is that of 6-phosphogluconolactonase from Buchnera aphidicola subsp. Acyrthosiphon pisum (strain 5A).